The primary structure comprises 160 residues: SsrA-binding protein (160 aa).

This sequence belongs to the SmpB family.

It localises to the cytoplasm. Required for rescue of stalled ribosomes mediated by trans-translation. Binds to transfer-messenger RNA (tmRNA), required for stable association of tmRNA with ribosomes. tmRNA and SmpB together mimic tRNA shape, replacing the anticodon stem-loop with SmpB. tmRNA is encoded by the ssrA gene; the 2 termini fold to resemble tRNA(Ala) and it encodes a 'tag peptide', a short internal open reading frame. During trans-translation Ala-aminoacylated tmRNA acts like a tRNA, entering the A-site of stalled ribosomes, displacing the stalled mRNA. The ribosome then switches to translate the ORF on the tmRNA; the nascent peptide is terminated with the 'tag peptide' encoded by the tmRNA and targeted for degradation. The ribosome is freed to recommence translation, which seems to be the essential function of trans-translation. In Yersinia pseudotuberculosis serotype O:1b (strain IP 31758), this protein is SsrA-binding protein.